The chain runs to 365 residues: MEEKGCKREEVISLLSAYRAEDLHHDHILSSMCTIPHEMAVFVHGMFSATNLGDPGLFPGTTKIEDRLVHSLGELMHHPGAGGYATSGGTESNLQAIRIAKKLKPEIKNPNIVVPASAHFSFDKTCDILGLEMRTVPYGKNYTVDCDKMAEMVDKNTISVSAIAGTTEYGMIDDVERIAKIALENDLFFHVDAAFGGMVIPFLPNPAPFDFEVPGVSSISLDPHKMGMSTIPCGCLLLREPEQFGTLNVDTPYLTVKKECTLAGTRPGADVAGAYAVIKLLGREGFRAVVAGCMENTRRLIEGMEAFGYTRAVDPVMNVATFEAGPVPKGWIVSHTRAGHLRFVVMPHVTRDVIENFLADVAKIN.

Lys-225 carries the N6-(pyridoxal phosphate)lysine modification.

Belongs to the group II decarboxylase family. MfnA subfamily. Pyridoxal 5'-phosphate is required as a cofactor.

The catalysed reaction is L-tyrosine + H(+) = tyramine + CO2. It catalyses the reaction L-aspartate + H(+) = beta-alanine + CO2. It participates in cofactor biosynthesis; methanofuran biosynthesis. The protein operates within cofactor biosynthesis; coenzyme A biosynthesis. Functionally, catalyzes the decarboxylation of L-tyrosine to produce tyramine for methanofuran biosynthesis. Can also catalyze the decarboxylation of L-aspartate to produce beta-alanine for coenzyme A (CoA) biosynthesis. The chain is Probable L-tyrosine/L-aspartate decarboxylase from Methanocorpusculum labreanum (strain ATCC 43576 / DSM 4855 / Z).